The primary structure comprises 529 residues: Peptide chain release factor 3 (529 aa).

In terms of domain architecture, tr-type G spans 10-278 (ARRRTFAIIS…MFVEFAPGPQ (269 aa)). Residues 19 to 26 (SHPDAGKT), 87 to 91 (DTPGH), and 141 to 144 (NKMD) each bind GTP.

It belongs to the TRAFAC class translation factor GTPase superfamily. Classic translation factor GTPase family. PrfC subfamily.

Its subcellular location is the cytoplasm. Functionally, increases the formation of ribosomal termination complexes and stimulates activities of RF-1 and RF-2. It binds guanine nucleotides and has strong preference for UGA stop codons. It may interact directly with the ribosome. The stimulation of RF-1 and RF-2 is significantly reduced by GTP and GDP, but not by GMP. The sequence is that of Peptide chain release factor 3 from Nitratidesulfovibrio vulgaris (strain DSM 19637 / Miyazaki F) (Desulfovibrio vulgaris).